We begin with the raw amino-acid sequence, 421 residues long: Histidine--tRNA ligase (421 aa).

Belongs to the class-II aminoacyl-tRNA synthetase family. As to quaternary structure, homodimer.

It is found in the cytoplasm. It carries out the reaction tRNA(His) + L-histidine + ATP = L-histidyl-tRNA(His) + AMP + diphosphate + H(+). This Francisella tularensis subsp. mediasiatica (strain FSC147) protein is Histidine--tRNA ligase.